Reading from the N-terminus, the 103-residue chain is Preprofallaxidin-6 (103 aa).

Residues 1 to 22 form the signal peptide; that stretch reads MASLKKSLFLVLFLGFVSLSIC. A propeptide spanning residues 23 to 49 is cleaved from the precursor; it reads EEEKRENEGNENEEEDENHEEGSEEKR. The disordered stretch occupies residues 24 to 50; that stretch reads EEKRENEGNENEEEDENHEEGSEEKRG. Acidic residues predominate over residues 31-41; the sequence is GNENEEEDENH. Residue Leu-65 is modified to Leucine amide. The segment at 67 to 103 is disordered; that stretch reads KRSEEKRYHPFGKRSEEKRYHPFGKRSEEKRYPPIGK. A propeptide spanning residues 69 to 73 is cleaved from the precursor; it reads SEEKR. Phe-77 bears the Phenylalanine amide mark. A propeptide spanning residues 81 to 85 is cleaved from the precursor; it reads SEEKR. Residue Phe-89 is modified to Phenylalanine amide. A propeptide spanning residues 93–97 is cleaved from the precursor; sequence SEEKR. Ile-101 bears the Isoleucine amide mark.

It belongs to the frog skin active peptide (FSAP) family. Brevinin subfamily. In terms of tissue distribution, expressed by the skin glands.

It is found in the secreted. In terms of biological role, fallaxidin-1.3 shows no antibacterial activity against Gram-positive or Gram-negative bacteria. Does not inhibit the formation of NO by neuronal nitric oxide synthase. Has no effect on splenocyte proliferation or smooth muscle contraction. Its function is as follows. Fallaxidin-1.4 shows no antibacterial activity against Gram-positive or Gram-negative bacteria. Does not inhibit the formation of NO by neuronal nitric oxide synthase. Has no effect on splenocyte proliferation or smooth muscle contraction. Functionally, fallaxidin-3.1 shows antibacterial activity against the Gram-positive bacteria E.faecalis (MIC=100 uM) and L.lactis (MIC=100 uM). No antibacterial activity against the Gram-positive bacteria B.cereus, L.innocua, M.luteus, S.epidermidis, S.uberis and S.aureus, or the Gram-negative bacteria E.cloacae and E.coli. This chain is Preprofallaxidin-6, found in Litoria fallax (Eastern dwarf tree frog).